We begin with the raw amino-acid sequence, 238 residues long: Ribonuclease PH (238 aa).

Phosphate-binding positions include arginine 86 and 124–126 (GTR).

The protein belongs to the RNase PH family. In terms of assembly, homohexameric ring arranged as a trimer of dimers.

The enzyme catalyses tRNA(n+1) + phosphate = tRNA(n) + a ribonucleoside 5'-diphosphate. Phosphorolytic 3'-5' exoribonuclease that plays an important role in tRNA 3'-end maturation. Removes nucleotide residues following the 3'-CCA terminus of tRNAs; can also add nucleotides to the ends of RNA molecules by using nucleoside diphosphates as substrates, but this may not be physiologically important. Probably plays a role in initiation of 16S rRNA degradation (leading to ribosome degradation) during starvation. This chain is Ribonuclease PH, found in Anaeromyxobacter sp. (strain Fw109-5).